Here is a 613-residue protein sequence, read N- to C-terminus: Apoptosis-inducing factor 1, mitochondrial (613 aa).

2 consecutive short sequence motifs (mitochondrial localization signal) follow at residues 1–31 (MFRC…PRQR) and 63–89 (KIDN…KTMK). The transit peptide at 1–54 (MFRCGGLAAGALKQKLVPLVRTVCVRSPRQRNRLPGNLFQRWHVPLELQMTRQM) directs the protein to the mitochondrion. Positions 55-101 (ASSGASGGKIDNSVLVLIVGLSTVGAGAYAYKTMKEDEKRYNERISG) are cleaved as a propeptide — removed in mature form. The tract at residues 100–127 (SGLGLTPEQKQKKAALSASEGEEVPQDK) is disordered. T105 bears the Phosphothreonine mark. K109 is modified (N6-succinyllysine). A phosphoserine mark is found at S116 and S118. The segment at 134–483 (FLLIGGGTAA…KPYWHQSMFW (350 aa)) is FAD-dependent oxidoreductase. Residues 138–142 (GGGTA), 164–165 (ED), R172, and K177 contribute to the FAD site. An NAD(+)-binding site is contributed by W196. An FAD-binding site is contributed by V233. A Glycyl lysine isopeptide (Lys-Gly) (interchain with G-Cter in ubiquitin) cross-link involves residue K255. A Phosphoserine modification is found at S268. Residue R285 participates in FAD binding. Position 292 is a phosphoserine (S292). NAD(+) contacts are provided by residues 308 to 311 (GGFL), E336, and K342. A Phosphoserine modification is found at S371. K388 carries the post-translational modification N6-acetyllysine. Position 399 (G399) interacts with NAD(+). D438 is an FAD binding site. Residues 446–451 (KLGRRR) carry the Nuclear localization signal motif. NAD(+) is bound by residues 453 to 454 (EH), W483, and E493. FAD-binding positions include 454-455 (HH) and W483. Polar residues predominate over residues 513–529 (AQDNPKSATEQSGTGIR). The tract at residues 513–554 (AQDNPKSATEQSGTGIRSESETESEASEITIPPSTPAVPQAP) is disordered. Position 521 is a phosphothreonine (T521). Phosphoserine occurs at positions 524 and 530. N583 is a binding site for NAD(+). The residue at position 593 (K593) is an N6-acetyllysine.

It belongs to the FAD-dependent oxidoreductase family. Monomer (oxidized form). Homodimer (reduced form). Upon reduction with NADH, undergoes dimerization and forms tight, long-lived FADH2-NAD charge transfer complexes (CTC) resistant to oxidation. Also dimerizes with isoform 3 preventing its release from mitochondria. Interacts with XIAP/BIRC4. Interacts (via N-terminus) with EIF3G (via C-terminus). Interacts with PRELID1. Interacts with CHCHD4; the interaction increases in presence of NADH. Interacts with processed form of PARP1 (Poly [ADP-ribose] polymerase 1, processed C-terminus); interaction is mediated with poly-ADP-ribose chains attached to PARP1, promoting translocation into the nucleus. The cofactor is FAD. Under normal conditions, a 54-residue N-terminal segment is first proteolytically removed during or just after translocation into the mitochondrial intermembrane space (IMS) by the mitochondrial processing peptidase (MPP) to form the inner-membrane-anchored mature form (AIFmit). During apoptosis, it is further proteolytically processed at amino-acid position 101 leading to the generation of the mature form, which is confined to the mitochondrial IMS in a soluble form (AIFsol). AIFsol is released to the cytoplasm in response to specific death signals, and translocated to the nucleus, where it induces nuclear apoptosis in a caspase-independent manner. In terms of processing, ubiquitination by XIAP/BIRC4 does not lead to proteasomal degradation. Ubiquitination at Lys-255 by XIAP/BIRC4 blocks its ability to bind DNA and induce chromatin degradation, thereby inhibiting its ability to induce cell death. In terms of tissue distribution, expressed in all tested tissues. Detected in muscle and skin fibroblasts (at protein level). Expressed in osteoblasts (at protein level). Brain specific. As to expression, expressed in all tested tissues except brain. In terms of tissue distribution, isoform 5 is frequently down-regulated in human cancers.

It localises to the mitochondrion intermembrane space. The protein localises to the mitochondrion inner membrane. It is found in the cytoplasm. The protein resides in the nucleus. Its subcellular location is the perinuclear region. It localises to the mitochondrion. The protein localises to the cytosol. The catalysed reaction is A + NADH + H(+) = AH2 + NAD(+). Functionally, functions both as NADH oxidoreductase and as regulator of apoptosis. In response to apoptotic stimuli, it is released from the mitochondrion intermembrane space into the cytosol and to the nucleus, where it functions as a proapoptotic factor in a caspase-independent pathway. Release into the cytoplasm is mediated upon binding to poly-ADP-ribose chains. The soluble form (AIFsol) found in the nucleus induces 'parthanatos' i.e. caspase-independent fragmentation of chromosomal DNA. Binds to DNA in a sequence-independent manner. Interacts with EIF3G, and thereby inhibits the EIF3 machinery and protein synthesis, and activates caspase-7 to amplify apoptosis. Plays a critical role in caspase-independent, pyknotic cell death in hydrogen peroxide-exposed cells. In contrast, participates in normal mitochondrial metabolism. Plays an important role in the regulation of respiratory chain biogenesis by interacting with CHCHD4 and controlling CHCHD4 mitochondrial import. Has NADH oxidoreductase activity. Does not induce nuclear apoptosis. Its function is as follows. Pro-apoptotic isoform. The chain is Apoptosis-inducing factor 1, mitochondrial from Homo sapiens (Human).